A 129-amino-acid chain; its full sequence is Glycine cleavage system H protein (129 aa).

In terms of domain architecture, Lipoyl-binding spans 23–104 (TVTVGITQHA…SYSAWLFKLK (82 aa)). At Lys-64 the chain carries N6-lipoyllysine.

It belongs to the GcvH family. In terms of assembly, the glycine cleavage system is composed of four proteins: P, T, L and H. The cofactor is (R)-lipoate.

The glycine cleavage system catalyzes the degradation of glycine. The H protein shuttles the methylamine group of glycine from the P protein to the T protein. This Nitrosomonas eutropha (strain DSM 101675 / C91 / Nm57) protein is Glycine cleavage system H protein.